We begin with the raw amino-acid sequence, 340 residues long: Cobalt-precorrin-5B C(1)-methyltransferase (340 aa).

Belongs to the CbiD family.

The catalysed reaction is Co-precorrin-5B + S-adenosyl-L-methionine = Co-precorrin-6A + S-adenosyl-L-homocysteine. The protein operates within cofactor biosynthesis; adenosylcobalamin biosynthesis; cob(II)yrinate a,c-diamide from sirohydrochlorin (anaerobic route): step 6/10. In terms of biological role, catalyzes the methylation of C-1 in cobalt-precorrin-5B to form cobalt-precorrin-6A. This Methanococcoides burtonii (strain DSM 6242 / NBRC 107633 / OCM 468 / ACE-M) protein is Cobalt-precorrin-5B C(1)-methyltransferase.